Here is an 878-residue protein sequence, read N- to C-terminus: DNA mismatch repair protein MutS (878 aa).

ATP is bound at residue 630-637 (GPNMAGKS).

It belongs to the DNA mismatch repair MutS family.

Functionally, this protein is involved in the repair of mismatches in DNA. It is possible that it carries out the mismatch recognition step. This protein has a weak ATPase activity. The chain is DNA mismatch repair protein MutS from Chlorobaculum tepidum (strain ATCC 49652 / DSM 12025 / NBRC 103806 / TLS) (Chlorobium tepidum).